Here is a 262-residue protein sequence, read N- to C-terminus: Ninja-family protein 3 (262 aa).

A disordered region spans residues 48–69; the sequence is RRNSLTCNTSKEAAGQSPEEMN.

It belongs to the Ninja family.

Its subcellular location is the nucleus. In Zea mays (Maize), this protein is Ninja-family protein 3.